Here is a 60-residue protein sequence, read N- to C-terminus: Large ribosomal subunit protein uL30 (60 aa).

The protein belongs to the universal ribosomal protein uL30 family. Part of the 50S ribosomal subunit.

The polypeptide is Large ribosomal subunit protein uL30 (Agathobacter rectalis (strain ATCC 33656 / DSM 3377 / JCM 17463 / KCTC 5835 / VPI 0990) (Eubacterium rectale)).